The sequence spans 503 residues: Cytochrome P450 3A43 (503 aa).

Residue cysteine 442 participates in heme binding.

Belongs to the cytochrome P450 family. Requires heme as cofactor. In terms of tissue distribution, highest expression level in prostate. Also expressed in liver, kidney, pancreas, fetal liver and fetal skeletal muscle.

It localises to the endoplasmic reticulum membrane. The protein localises to the microsome membrane. The enzyme catalyses an organic molecule + reduced [NADPH--hemoprotein reductase] + O2 = an alcohol + oxidized [NADPH--hemoprotein reductase] + H2O + H(+). Functionally, exhibits low testosterone 6-beta-hydroxylase activity. This chain is Cytochrome P450 3A43 (CYP3A43), found in Homo sapiens (Human).